We begin with the raw amino-acid sequence, 256 residues long: DNA repair protein RecO (256 aa).

It belongs to the RecO family.

Involved in DNA repair and RecF pathway recombination. The protein is DNA repair protein RecO of Shouchella clausii (strain KSM-K16) (Alkalihalobacillus clausii).